We begin with the raw amino-acid sequence, 337 residues long: Eukaryotic translation initiation factor 3 subunit H (337 aa).

The MPN domain maps to 21–153 (VQCDGLAVMK…LKAYRLTPQA (133 aa)).

This sequence belongs to the eIF-3 subunit H family. In terms of assembly, component of the eukaryotic translation initiation factor 3 (eIF-3) complex. The eIF-3 complex interacts with pix. Interacts with mxt.

It localises to the cytoplasm. Its function is as follows. Component of the eukaryotic translation initiation factor 3 (eIF-3) complex, which is involved in protein synthesis of a specialized repertoire of mRNAs and, together with other initiation factors, stimulates binding of mRNA and methionyl-tRNAi to the 40S ribosome. The eIF-3 complex specifically targets and initiates translation of a subset of mRNAs involved in cell proliferation. This is Eukaryotic translation initiation factor 3 subunit H from Drosophila virilis (Fruit fly).